The primary structure comprises 160 residues: Transcription antitermination protein NusB (160 aa).

This sequence belongs to the NusB family.

Functionally, involved in transcription antitermination. Required for transcription of ribosomal RNA (rRNA) genes. Binds specifically to the boxA antiterminator sequence of the ribosomal RNA (rrn) operons. The polypeptide is Transcription antitermination protein NusB (Rhizobium rhizogenes (strain K84 / ATCC BAA-868) (Agrobacterium radiobacter)).